Consider the following 135-residue polypeptide: MPVDFNGYWKMLSNENFEEYLRALDVNVALRKIANLLKPDKEIVQDGDHMIIRTLSTFRNYIMDFQVGKEFEEDLTGIDDRKCMTTVSWDGDKLQCVQKGEKEGRGWTQWIEGDELHLEMRAEGVICKQVFKKVH.

The segment at Arg22–Lys32 is important for interaction with STRA6. 3 residues coordinate all-trans-retinol: Lys41, Met63, and Gln109.

Belongs to the calycin superfamily. Fatty-acid binding protein (FABP) family. In terms of assembly, interacts (only as retinol-free apoprotein) with STRA6.

Its subcellular location is the cytoplasm. The protein resides in the lipid droplet. In terms of biological role, cytoplasmic retinol-binding protein. Accepts retinol from the transport protein STRA6, and thereby contributes to retinol uptake, storage and retinoid homeostasis. The polypeptide is Retinol-binding protein 1 (Rbp1) (Mus musculus (Mouse)).